Consider the following 324-residue polypeptide: Heparan sulfate 2-O-sulfotransferase hst-2 (324 aa).

The Cytoplasmic segment spans residues methionine 1–arginine 6. A helical; Signal-anchor for type II membrane protein membrane pass occupies residues lysine 7–leucine 24. Over lysine 25–serine 324 the chain is Lumenal. N-linked (GlcNAc...) asparagine glycosylation is found at asparagine 75 and asparagine 94. Active-site residues include histidine 107 and histidine 109. Residue asparagine 161 is glycosylated (N-linked (GlcNAc...) asparagine). Disulfide bonds link cysteine 167-cysteine 175 and cysteine 188-cysteine 194.

It belongs to the sulfotransferase 3 family. As to quaternary structure, homotrimer. Present in the hypodermis, muscle, distal tip cells (DTCs) and in neurons (at protein level).

Its subcellular location is the golgi apparatus membrane. Catalyzes the transfer of sulfate to the C2-position of selected hexuronic acid residues within the maturing heparan sulfate (HS). Involved in cell adhesion and guidance by specifically modifying proteoglycans in the extracellular matrix and on the cell surface that are essential for axon migrations. This chain is Heparan sulfate 2-O-sulfotransferase hst-2, found in Caenorhabditis elegans.